The primary structure comprises 1345 residues: Aldehyde oxidase 2 (1345 aa).

One can recognise a 2Fe-2S ferredoxin-type domain in the interval 9-96 (DDLEFFVNGR…GAAVTTVEGV (88 aa)). [2Fe-2S] cluster is bound by residues Cys-48, Cys-53, Cys-56, and Cys-78. Gln-117 lines the Mo-molybdopterin pocket. The [2Fe-2S] cluster site is built by Cys-118, Cys-121, Cys-153, and Cys-155. Cys-155 provides a ligand contact to Mo-molybdopterin. Residues 238-423 (FYGERITWIA…GSVYIPHSQK (186 aa)) enclose the FAD-binding PCMH-type domain. FAD is bound by residues 266–273 (LISGNTAL), Ala-347, Ser-356, His-360, Asp-369, and Leu-413. Mo-molybdopterin contacts are provided by residues 812-813 (GF), 1094-1097 (ASVG), Gln-1209, and Leu-1274. The active-site Proton acceptor; for azaheterocycle hydroxylase activity is the Glu-1276.

The protein belongs to the xanthine dehydrogenase family. Homodimer. Requires [2Fe-2S] cluster as cofactor. The cofactor is FAD. Mo-molybdopterin serves as cofactor. As to expression, expressed in olfactory mucosa epithelium (at protein level). Detected in skin.

The protein resides in the cytoplasm. It catalyses the reaction an aldehyde + O2 + H2O = a carboxylate + H2O2 + H(+). Oxidase with broad substrate specificity, oxidizing aromatic azaheterocycles, such as phthalazine, as well as aldehydes, such as benzaldehyde and retinal. Cannot use hypoxanthine as substrate. This Mus musculus (Mouse) protein is Aldehyde oxidase 2 (Aox2).